The sequence spans 418 residues: Tyrosine--tRNA ligase (418 aa).

Residue Y34 participates in L-tyrosine binding. Positions 39–48 (PTADSLHLGH) match the 'HIGH' region motif. The L-tyrosine site is built by Y169 and Q173. The short motif at 229-233 (KFGKS) is the 'KMSKS' region element. K232 contributes to the ATP binding site. The 67-residue stretch at 352–418 (NNIVELLVSS…GKKKYFVLTY (67 aa)) folds into the S4 RNA-binding domain.

Belongs to the class-I aminoacyl-tRNA synthetase family. TyrS type 1 subfamily. As to quaternary structure, homodimer.

The protein localises to the cytoplasm. It catalyses the reaction tRNA(Tyr) + L-tyrosine + ATP = L-tyrosyl-tRNA(Tyr) + AMP + diphosphate + H(+). In terms of biological role, catalyzes the attachment of tyrosine to tRNA(Tyr) in a two-step reaction: tyrosine is first activated by ATP to form Tyr-AMP and then transferred to the acceptor end of tRNA(Tyr). The chain is Tyrosine--tRNA ligase from Streptococcus pneumoniae serotype 19F (strain G54).